We begin with the raw amino-acid sequence, 151 residues long: C-C motif chemokine 25 (151 aa).

The signal sequence occupies residues 1-22; the sequence is MNLWLLVCLVASLMGAWSTVHT. 2 cysteine pairs are disulfide-bonded: Cys29–Cys57 and Cys30–Cys73. The tract at residues 94-151 is disordered; sequence THSKQHLGSRRNLQDSHLGGQRSNTGMSRLAHSKSKSSRSTRSNKKKTSFLNMANPGP. The span at 124-141 shows a compositional bias: basic residues; that stretch reads AHSKSKSSRSTRSNKKKT.

It belongs to the intercrine beta (chemokine CC) family.

Its subcellular location is the secreted. Functionally, potentially involved in T-cell development. Recombinant protein shows chemotactic activity on thymocytes, macrophages, THP-1 cells, and dendritics cells but is inactive on peripheral blood lymphocytes and neutrophils. Binds to CCR9. Binds to atypical chemokine receptor ACKR4 and mediates the recruitment of beta-arrestin (ARRB1/2) to ACKR4. The protein is C-C motif chemokine 25 (CCL25) of Canis lupus familiaris (Dog).